A 292-amino-acid chain; its full sequence is Shikimate dehydrogenase (NADP(+)) (292 aa).

Shikimate is bound by residues S22–S24 and S69. K73 acts as the Proton acceptor in catalysis. Shikimate-binding residues include N94 and D111. NADP(+) is bound by residues G135–A139 and I236. Shikimate is bound at residue Y238. G260 is an NADP(+) binding site.

This sequence belongs to the shikimate dehydrogenase family. Homodimer.

The catalysed reaction is shikimate + NADP(+) = 3-dehydroshikimate + NADPH + H(+). Its pathway is metabolic intermediate biosynthesis; chorismate biosynthesis; chorismate from D-erythrose 4-phosphate and phosphoenolpyruvate: step 4/7. Its function is as follows. Involved in the biosynthesis of the chorismate, which leads to the biosynthesis of aromatic amino acids. Catalyzes the reversible NADPH linked reduction of 3-dehydroshikimate (DHSA) to yield shikimate (SA). The chain is Shikimate dehydrogenase (NADP(+)) from Streptococcus pyogenes serotype M18 (strain MGAS8232).